The chain runs to 608 residues: Aspartate--tRNA(Asp/Asn) ligase (608 aa).

Residue glutamate 179 coordinates L-aspartate. The segment at glutamine 203–lysine 206 is aspartate. Arginine 225 serves as a coordination point for L-aspartate. Residues arginine 225–glutamate 227 and glutamine 234 contribute to the ATP site. Histidine 461 provides a ligand contact to L-aspartate. Glutamate 494 contacts ATP. Arginine 501 serves as a coordination point for L-aspartate. Glycine 546–arginine 549 is a binding site for ATP.

This sequence belongs to the class-II aminoacyl-tRNA synthetase family. Type 1 subfamily. As to quaternary structure, homodimer.

It localises to the cytoplasm. The enzyme catalyses tRNA(Asx) + L-aspartate + ATP = L-aspartyl-tRNA(Asx) + AMP + diphosphate. Its function is as follows. Aspartyl-tRNA synthetase with relaxed tRNA specificity since it is able to aspartylate not only its cognate tRNA(Asp) but also tRNA(Asn). Reaction proceeds in two steps: L-aspartate is first activated by ATP to form Asp-AMP and then transferred to the acceptor end of tRNA(Asp/Asn). This is Aspartate--tRNA(Asp/Asn) ligase from Psychrobacter arcticus (strain DSM 17307 / VKM B-2377 / 273-4).